A 255-amino-acid polypeptide reads, in one-letter code: Small ribosomal subunit protein eS1 (255 aa).

A compositionally biased stretch (basic residues) spans 1–18; it reads MAVGKNKRLSKGKKGLKK. A disordered region spans residues 1-28; sequence MAVGKNKRLSKGKKGLKKRTQDPFSRKD. Position 2 is an N-acetylalanine; partial (Ala-2). The segment covering 19-28 has biased composition (basic and acidic residues); it reads RTQDPFSRKD.

Belongs to the eukaryotic ribosomal protein eS1 family. Component of the small ribosomal subunit. Mature ribosomes consist of a small (40S) and a large (60S) subunit. The 40S subunit contains about 33 different proteins and 1 molecule of RNA (18S). The 60S subunit contains about 49 different proteins and 3 molecules of RNA (25S, 5.8S and 5S).

It localises to the cytoplasm. This Paracoccidioides lutzii (strain ATCC MYA-826 / Pb01) (Paracoccidioides brasiliensis) protein is Small ribosomal subunit protein eS1.